We begin with the raw amino-acid sequence, 149 residues long: Protein K7 (149 aa).

The protein belongs to the orthopoxvirus OPG044 family. In terms of assembly, interacts with DDX3; this interaction inhibits DDX3 and suppresses DDX3-mediated IFN-beta promoter induction. Interacts with TRAF6 and IRAK2; these interactions suppress TLR-dependent NF-KappaB activation.

It localises to the host cytoplasm. In terms of biological role, virulence factor that affects the acute immune response to infection. Bcl-2-like protein which, through its interaction with the DEAD box RNA helicase DDX3X/DDX3, prevents TBK1/IKKepsilon-mediated IRF3 activation. Contributes to virulence by binding to the host TRAF6 and IRAK2 and preventing host NF-kappa-B activation. The chain is Protein K7 (OPG044) from Homo sapiens (Human).